Reading from the N-terminus, the 275-residue chain is MQQIQRDIAQALQVQPPFQSEADVQAQIARRIAFIQQCLKDSGLKTLVLGISGGVDSLTAGLLAQRAVEQLREQTGDQAYRFIAVRLPYQVQQDEADAQASLATIRADEEQTVNIGPSVKALAEQLEALEGLEPAKSDFVIGNIKARIRMVAQYAIAGARGGLVIGTDHAAEAVMGFFTKFGDGACDLAPLSGLAKHQVRALARALGAPENLVEKIPTADLEDLRPGHPDEASHGVTYAEIDAFLHGQPLREEAARVIVDTYHKTQHKRELPKAP.

50–57 (GISGGVDS) is an ATP binding site. Aspartate 56 is a Mg(2+) binding site. Residue arginine 147 coordinates deamido-NAD(+). Position 167 (threonine 167) interacts with ATP. Glutamate 172 lines the Mg(2+) pocket. Deamido-NAD(+) contacts are provided by lysine 180 and aspartate 187. Positions 196 and 218 each coordinate ATP. 267–268 (HK) is a binding site for deamido-NAD(+).

Belongs to the NAD synthetase family. In terms of assembly, homodimer.

The catalysed reaction is deamido-NAD(+) + NH4(+) + ATP = AMP + diphosphate + NAD(+) + H(+). The protein operates within cofactor biosynthesis; NAD(+) biosynthesis; NAD(+) from deamido-NAD(+) (ammonia route): step 1/1. Catalyzes the ATP-dependent amidation of deamido-NAD to form NAD. Uses ammonia as a nitrogen source. The polypeptide is NH(3)-dependent NAD(+) synthetase (Pseudomonas aeruginosa (strain LESB58)).